The primary structure comprises 211 residues: Ribosomal RNA small subunit methyltransferase G (211 aa).

Residues glycine 72, phenylalanine 77, 125 to 126, and arginine 141 each bind S-adenosyl-L-methionine; that span reads IE.

Belongs to the methyltransferase superfamily. RNA methyltransferase RsmG family.

It localises to the cytoplasm. It catalyses the reaction guanosine(527) in 16S rRNA + S-adenosyl-L-methionine = N(7)-methylguanosine(527) in 16S rRNA + S-adenosyl-L-homocysteine. Its function is as follows. Specifically methylates the N7 position of guanine in position 527 of 16S rRNA. In Allorhizobium ampelinum (strain ATCC BAA-846 / DSM 112012 / S4) (Agrobacterium vitis (strain S4)), this protein is Ribosomal RNA small subunit methyltransferase G.